The primary structure comprises 485 residues: Glutamyl-tRNA(Gln) amidotransferase subunit A (485 aa).

Active-site charge relay system residues include lysine 78 and serine 153. Catalysis depends on serine 177, which acts as the Acyl-ester intermediate.

This sequence belongs to the amidase family. GatA subfamily. As to quaternary structure, heterotrimer of A, B and C subunits.

The catalysed reaction is L-glutamyl-tRNA(Gln) + L-glutamine + ATP + H2O = L-glutaminyl-tRNA(Gln) + L-glutamate + ADP + phosphate + H(+). In terms of biological role, allows the formation of correctly charged Gln-tRNA(Gln) through the transamidation of misacylated Glu-tRNA(Gln) in organisms which lack glutaminyl-tRNA synthetase. The reaction takes place in the presence of glutamine and ATP through an activated gamma-phospho-Glu-tRNA(Gln). This Pelobacter propionicus (strain DSM 2379 / NBRC 103807 / OttBd1) protein is Glutamyl-tRNA(Gln) amidotransferase subunit A.